Reading from the N-terminus, the 396-residue chain is MNLIKMSDIDLSGKRVLIREDLNVPIKDGMITSDQRLQAALPTIKSALDNGAAVIVLSHLGRPEEGKYEKKFSLEPVADYLRKNLEYPVRFVKDYLSGVDVKPGELVVCENVRFNPGEKANDEALAKKLANLCDVFVMDAFGTAHRAQASTYGVAQYAPVAVAGPLLIRELEALNQVLKAPKKPIVAIVGGAKVSSKLSLLKQLVGMVDVLIPGGGIANTFLKAQGFEIGISLYEPDLLDEARHILILAKEKGCQIPLPTDVVVGKTFSETCPAFNKSLSNVAEDDMILDIGPETIRDYVDLIHEANTIIWNGPVGVFEFPQFAYGTRAIAIAIAESDAFSIAGGGDTLAAVDLYDLNQQISYISTGGGAFLECLEGKTLPAVAILQERAKHVKTN.

Residues 21–23, arginine 36, 59–62, arginine 113, and arginine 146 each bind substrate; these read DLN and HLGR. ATP contacts are provided by residues lysine 197, glutamate 319, and 345–348; that span reads GGDT.

This sequence belongs to the phosphoglycerate kinase family. In terms of assembly, monomer.

It is found in the cytoplasm. It catalyses the reaction (2R)-3-phosphoglycerate + ATP = (2R)-3-phospho-glyceroyl phosphate + ADP. It participates in carbohydrate degradation; glycolysis; pyruvate from D-glyceraldehyde 3-phosphate: step 2/5. This is Phosphoglycerate kinase from Legionella pneumophila (strain Paris).